A 368-amino-acid chain; its full sequence is Polynucleotide 5'-hydroxyl-kinase NOL9 (368 aa).

Gly-36–Ser-43 serves as a coordination point for ATP.

This sequence belongs to the Clp1 family. NOL9/GRC3 subfamily.

It is found in the nucleus. It localises to the nucleolus. In terms of biological role, polynucleotide 5'-kinase involved in rRNA processing. The protein is Polynucleotide 5'-hydroxyl-kinase NOL9 of Arabidopsis thaliana (Mouse-ear cress).